The chain runs to 302 residues: Nucleotide-binding protein Bcep18194_A6125 (302 aa).

8-15 (GISGSGKS) is an ATP binding site. 57 to 60 (DARS) contributes to the GTP binding site.

It belongs to the RapZ-like family.

Displays ATPase and GTPase activities. This is Nucleotide-binding protein Bcep18194_A6125 from Burkholderia lata (strain ATCC 17760 / DSM 23089 / LMG 22485 / NCIMB 9086 / R18194 / 383).